Reading from the N-terminus, the 220-residue chain is Redox-sensing transcriptional repressor Rex (220 aa).

Residues 25-64 (WYLSNVKLLKQKGERYVSSTQISKEINIDASQIAKDLSYV) constitute a DNA-binding region (H-T-H motif). 99-104 (GVGSLG) is a binding site for NAD(+).

Belongs to the transcriptional regulatory Rex family. As to quaternary structure, homodimer.

Its subcellular location is the cytoplasm. Its function is as follows. Modulates transcription in response to changes in cellular NADH/NAD(+) redox state. This chain is Redox-sensing transcriptional repressor Rex, found in Bacteroides fragilis (strain ATCC 25285 / DSM 2151 / CCUG 4856 / JCM 11019 / LMG 10263 / NCTC 9343 / Onslow / VPI 2553 / EN-2).